We begin with the raw amino-acid sequence, 74 residues long: Translation initiation factor IF-1 (74 aa).

The 72-residue stretch at 1 to 72 folds into the S1-like domain; it reads MSKEDAIEVE…NKGRITYRLK (72 aa).

The protein belongs to the IF-1 family. Component of the 30S ribosomal translation pre-initiation complex which assembles on the 30S ribosome in the order IF-2 and IF-3, IF-1 and N-formylmethionyl-tRNA(fMet); mRNA recruitment can occur at any time during PIC assembly.

It is found in the cytoplasm. Functionally, one of the essential components for the initiation of protein synthesis. Stabilizes the binding of IF-2 and IF-3 on the 30S subunit to which N-formylmethionyl-tRNA(fMet) subsequently binds. Helps modulate mRNA selection, yielding the 30S pre-initiation complex (PIC). Upon addition of the 50S ribosomal subunit IF-1, IF-2 and IF-3 are released leaving the mature 70S translation initiation complex. The chain is Translation initiation factor IF-1 from Synechococcus sp. (strain JA-3-3Ab) (Cyanobacteria bacterium Yellowstone A-Prime).